The sequence spans 180 residues: Transmembrane protein 190 (180 aa).

The first 21 residues, 1-21 (MVGSGIPALGLLLLMQGSADG), serve as a signal peptide directing secretion. Residues 22–81 (NGIQGFFYPWSCEGDVWDRESCGGQAAIENPNLCLRLRCCYRDGVCYHQRPDENMRRKHM) are Extracellular-facing. The P-type domain occupies 31-71 (WSCEGDVWDRESCGGQAAIENPNLCLRLRCCYRDGVCYHQR). 3 disulfide bridges follow: Cys33–Cys61, Cys43–Cys60, and Cys55–Cys67. A helical membrane pass occupies residues 82 to 102 (WALGWTCGGLLFLITSICLFW). At 103–180 (WARRHDMLRL…EETEGGDEDD (78 aa)) the chain is on the cytoplasmic side. Residues 131–140 (KDRTPSEKKT) are compositionally biased toward basic and acidic residues. Positions 131–180 (KDRTPSEKKTPSVGSIPPAAPTEGALDVSGGTEGEGTEGGEETEGGDEDD) are disordered. The segment covering 165–180 (EGTEGGEETEGGDEDD) has biased composition (acidic residues).

Its subcellular location is the membrane. The chain is Transmembrane protein 190 (TMEM190) from Bos taurus (Bovine).